The primary structure comprises 117 residues: Large ribosomal subunit protein uL18 (117 aa).

The protein belongs to the universal ribosomal protein uL18 family. As to quaternary structure, part of the 50S ribosomal subunit; part of the 5S rRNA/L5/L18/L25 subcomplex. Contacts the 5S and 23S rRNAs.

Its function is as follows. This is one of the proteins that bind and probably mediate the attachment of the 5S RNA into the large ribosomal subunit, where it forms part of the central protuberance. The sequence is that of Large ribosomal subunit protein uL18 from Aeromonas salmonicida (strain A449).